Consider the following 680-residue polypeptide: Translation factor GUF1 homolog, chloroplastic (680 aa).

A chloroplast-targeting transit peptide spans 1–51; that stretch reads MAAKINSLAALVSLQASHHHHXSTPFYFSPFSPHLSTTLTSRRRSLRSAVV. Residues 83 to 264 form the tr-type G domain; that stretch reads SNIRNFCIIA…AIVKRIPPPC (182 aa). Residues 92-99, 157-161, and 211-214 each bind GTP; these read AHIDHGKS, DTPGH, and NKID.

This sequence belongs to the TRAFAC class translation factor GTPase superfamily. Classic translation factor GTPase family. LepA subfamily.

The protein localises to the plastid. It localises to the chloroplast. The catalysed reaction is GTP + H2O = GDP + phosphate + H(+). Its function is as follows. Promotes chloroplast protein synthesis. May act as a fidelity factor of the translation reaction, by catalyzing a one-codon backward translocation of tRNAs on improperly translocated ribosomes. The sequence is that of Translation factor GUF1 homolog, chloroplastic from Vitis vinifera (Grape).